A 117-amino-acid chain; its full sequence is UPF0102 protein Ssed_4252 (117 aa).

The protein belongs to the UPF0102 family.

The chain is UPF0102 protein Ssed_4252 from Shewanella sediminis (strain HAW-EB3).